The chain runs to 57 residues: uncharacterized protein (57 aa).

This is an uncharacterized protein from Thermoproteus tenax virus 1 (strain KRA1) (TTV1).